Here is a 155-residue protein sequence, read N- to C-terminus: Troponin C, body wall muscle (155 aa).

Val-1 is modified (N-acetylvaline). EF-hand domains are found at residues 7–43 (DEKSQFRAAFDIFVADAKDGTISSKELGKVMKMLGQN), 44–79 (PTEKDLQEMIEEVDIDGSGTIDFEEFCLMMYRQMQA), 88–121 (REEKELSEAFRLFDLDGDGIGDELKAALDGTGEN), and 122–155 (VETWEVDEMMADGDKNHDSQIDYEEWVTMMKFVQ). Ca(2+) contacts are provided by Asp-57, Asp-59, Ser-61, Thr-63, and Glu-68. Residues Asp-135, Asn-137, Asp-139, Gln-141, and Glu-146 each coordinate Ca(2+).

Belongs to the troponin C family.

Its function is as follows. Troponin is the central regulatory protein of muscle contraction. Tn consists of three components: Tn-I which is the inhibitor of actomyosin ATPase, Tn-T which contains the binding site for tropomyosin and Tn-C. The binding of calcium to Tn-C abolishes the inhibitory action of Tn on actin filaments. This Halocynthia roretzi (Sea squirt) protein is Troponin C, body wall muscle.